A 119-amino-acid chain; its full sequence is Integration host factor subunit alpha (119 aa).

The interval 96–119 is disordered; the sequence is INGQQGSGKMNGEASHEQLSAEPE.

This sequence belongs to the bacterial histone-like protein family. Heterodimer of an alpha and a beta chain.

Its function is as follows. This protein is one of the two subunits of integration host factor, a specific DNA-binding protein that functions in genetic recombination as well as in transcriptional and translational control. This chain is Integration host factor subunit alpha, found in Bradyrhizobium sp. (strain BTAi1 / ATCC BAA-1182).